The primary structure comprises 795 residues: Phenylalanine--tRNA ligase beta subunit (795 aa).

The tRNA-binding domain maps to 39–148 (AAEFNGVVIG…LDAPLGTDLR (110 aa)). Residues 401–476 (PKPAQILLRR…RIYGYNNIPN (76 aa)) enclose the B5 domain. Aspartate 454, aspartate 460, glutamate 463, and glutamate 464 together coordinate Mg(2+). Residues 701 to 794 (SKFPANRRDI…LKTEFNASLR (94 aa)) enclose the FDX-ACB domain.

It belongs to the phenylalanyl-tRNA synthetase beta subunit family. Type 1 subfamily. In terms of assembly, tetramer of two alpha and two beta subunits. Mg(2+) is required as a cofactor.

The protein localises to the cytoplasm. It catalyses the reaction tRNA(Phe) + L-phenylalanine + ATP = L-phenylalanyl-tRNA(Phe) + AMP + diphosphate + H(+). The chain is Phenylalanine--tRNA ligase beta subunit from Shewanella oneidensis (strain ATCC 700550 / JCM 31522 / CIP 106686 / LMG 19005 / NCIMB 14063 / MR-1).